The sequence spans 157 residues: Endoribonuclease YbeY (157 aa).

Residues His116, His120, and His126 each contribute to the Zn(2+) site.

It belongs to the endoribonuclease YbeY family. The cofactor is Zn(2+).

It localises to the cytoplasm. Functionally, single strand-specific metallo-endoribonuclease involved in late-stage 70S ribosome quality control and in maturation of the 3' terminus of the 16S rRNA. In Pseudarthrobacter chlorophenolicus (strain ATCC 700700 / DSM 12829 / CIP 107037 / JCM 12360 / KCTC 9906 / NCIMB 13794 / A6) (Arthrobacter chlorophenolicus), this protein is Endoribonuclease YbeY.